A 310-amino-acid chain; its full sequence is Olfactory receptor 5P55 (310 aa).

At 1–25 the chain is on the extracellular side; that stretch reads METQNHTTVTEFILLGLTESSTLRV. Asparagine 5 carries N-linked (GlcNAc...) asparagine glycosylation. Residues 26–46 traverse the membrane as a helical segment; that stretch reads ILFMVFLGIYTVTLVGNFSII. At 47–54 the chain is on the cytoplasmic side; it reads SLIRSCPQ. The helical transmembrane segment at 55-75 threads the bilayer; the sequence is LHTPMYLFLSHLAFVDIGFST. Over 76-99 the chain is Extracellular; it reads SITPTMFKGFLGNRLVLSVAACIA. Cysteine 97 and cysteine 189 are disulfide-bonded. The helical transmembrane segment at 100–120 threads the bilayer; it reads QFCITVTFGTVECFLLAVMAY. Residues 121-133 lie on the Cytoplasmic side of the membrane; that stretch reads DRYVAICSPLLYS. A helical membrane pass occupies residues 134 to 154; the sequence is THMSPRICFLLVGASYVGGCV. Residues 155–196 lie on the Extracellular side of the membrane; sequence NSGAFTSCLSILSFCGPNQIDHFFCDFPAVLKLSCSDVSIIG. Residues 197-217 traverse the membrane as a helical segment; the sequence is IIPSISAGSIIVITVFVIAVS. The Cytoplasmic segment spans residues 218–237; that stretch reads YAYILITILKMRSTEGRQKA. Residues 238-258 form a helical membrane-spanning segment; the sequence is FSTCTSHLTAVTLYYGTITFI. At 259 to 271 the chain is on the extracellular side; sequence YVMPKSNYSTAQN. A glycan (N-linked (GlcNAc...) asparagine) is linked at asparagine 265. The helical transmembrane segment at 272 to 292 threads the bilayer; the sequence is KILSVFYTVVIPMLNPLIYSL. Residues 293–310 lie on the Cytoplasmic side of the membrane; it reads RNRDVKEALRKAIIRIFP.

It belongs to the G-protein coupled receptor 1 family.

The protein resides in the cell membrane. Its function is as follows. Potential odorant receptor. The polypeptide is Olfactory receptor 5P55 (Mus musculus (Mouse)).